The following is a 305-amino-acid chain: UDP-3-O-acyl-N-acetylglucosamine deacetylase (305 aa).

His-79, His-238, and Asp-242 together coordinate Zn(2+). The Proton donor role is filled by His-265.

Belongs to the LpxC family. Zn(2+) serves as cofactor.

It carries out the reaction a UDP-3-O-[(3R)-3-hydroxyacyl]-N-acetyl-alpha-D-glucosamine + H2O = a UDP-3-O-[(3R)-3-hydroxyacyl]-alpha-D-glucosamine + acetate. The protein operates within glycolipid biosynthesis; lipid IV(A) biosynthesis; lipid IV(A) from (3R)-3-hydroxytetradecanoyl-[acyl-carrier-protein] and UDP-N-acetyl-alpha-D-glucosamine: step 2/6. In terms of biological role, catalyzes the hydrolysis of UDP-3-O-myristoyl-N-acetylglucosamine to form UDP-3-O-myristoylglucosamine and acetate, the committed step in lipid A biosynthesis. This is UDP-3-O-acyl-N-acetylglucosamine deacetylase from Pectobacterium atrosepticum (strain SCRI 1043 / ATCC BAA-672) (Erwinia carotovora subsp. atroseptica).